The sequence spans 176 residues: MNYCFLVFLVYLVFAVNGEDIWKVNKKCTSGGKNQDRKLDQIIQKGQQVKIQNICKLIRDKPHTNQEKEKCMKFCKKVCKGYRGACDGNICYCSRPSNLGPDWKVSKECKDPNNKDSRPTEIVPYRQQLAIPNICKLKNSETNEDSKCKKHCKEKCRGGNDAGCDGNFCYCRPKNK.

An N-terminal signal peptide occupies residues 1–18 (MNYCFLVFLVYLVFAVNG).

Its subcellular location is the secreted. The protein is Salivary antigen 1 of Ctenocephalides felis (Cat flea).